A 119-amino-acid chain; its full sequence is Large ribosomal subunit protein bL20 (119 aa).

It belongs to the bacterial ribosomal protein bL20 family.

Binds directly to 23S ribosomal RNA and is necessary for the in vitro assembly process of the 50S ribosomal subunit. It is not involved in the protein synthesizing functions of that subunit. The protein is Large ribosomal subunit protein bL20 of Geobacillus kaustophilus (strain HTA426).